We begin with the raw amino-acid sequence, 265 residues long: Secreted RxLR effector protein 146 (265 aa).

An N-terminal signal peptide occupies residues 1–25; sequence MRYYTQVVAASLVATLAVVDSIVFA. The short motif at 32–50 is the RxLR-dEER element; it reads RFLRQDGATVTRGGKGEER. N-linked (GlcNAc...) asparagine glycosylation is found at asparagine 71 and asparagine 148.

This sequence belongs to the RxLR effector family.

It is found in the secreted. The protein localises to the host nucleus. Its subcellular location is the host cytoplasm. Functionally, secreted effector that completely suppresses the host cell death induced by cell death-inducing proteins. The protein is Secreted RxLR effector protein 146 of Plasmopara viticola (Downy mildew of grapevine).